The following is a 410-amino-acid chain: 45 kDa immediate-early protein 2 (410 aa).

The disordered stretch occupies residues 36–166; it reads SEEEQGEEVE…SKRISELDNE (131 aa). Low complexity-rich tracts occupy residues 47–67, 90–101, and 132–147; these read RGAT…TSPT, SSSSSSCSSASD, and AASS…SSGG. A zinc finger lies at 257 to 283; that stretch reads VRCRLGTMCNLALSTPFLMEHTMPVTH.

In terms of biological role, activates the E1.7 promoter. This activation is augmented by the IE1 protein. It down-regulates the transcription of genes under the control of the major IE promoter. This chain is 45 kDa immediate-early protein 2 (UL122), found in Homo sapiens (Human).